A 526-amino-acid chain; its full sequence is Na(+)/H(+) antiporter NhaB (526 aa).

12 helical membrane passes run 25 to 45 (ILLF…AAGW), 52 to 72 (IFTL…LLAI), 89 to 109 (LVAN…IYFM), 130 to 164 (LSLA…FYAI), 204 to 224 (LMMH…VGEP), 242 to 262 (IRMA…CILV), 305 to 325 (AVIA…VGLI), 350 to 370 (QEAL…AVII), 391 to 411 (LALF…VFVG), 448 to 468 (VATP…LAPL), 479 to 499 (MALP…ELLL), and 505 to 525 (WFYQ…LPAL).

Belongs to the NhaB Na(+)/H(+) (TC 2.A.34) antiporter family.

Its subcellular location is the cell inner membrane. The enzyme catalyses 2 Na(+)(in) + 3 H(+)(out) = 2 Na(+)(out) + 3 H(+)(in). Functionally, na(+)/H(+) antiporter that extrudes sodium in exchange for external protons. The chain is Na(+)/H(+) antiporter NhaB from Aeromonas salmonicida (strain A449).